Reading from the N-terminus, the 431-residue chain is Metal-binding activator 1 (431 aa).

Positions 1 to 40 (MILIDDIKYACMECVRGHRSSSCKHHERPLLQVRSKGRPG) form a DNA-binding region, copper-fist. Zn(2+) is bound by residues cysteine 11, cysteine 14, cysteine 23, and histidine 25.

It is found in the nucleus. Functionally, copper ion-sensing transcription factor which activates transcription of the CTR1 copper transporter under low-copper conditions. Promotes filamentous and invasive growth. In Candida albicans (strain SC5314 / ATCC MYA-2876) (Yeast), this protein is Metal-binding activator 1 (MAC1).